A 52-amino-acid polypeptide reads, in one-letter code: uncharacterized protein (52 aa).

The disordered stretch occupies residues 1–52 (MFGFIYRDPSPAPQGKIRDGSKDPKTPGGGGGGGGGISPNGGAPLGGKGFSM). Residues 16-25 (KIRDGSKDPK) are compositionally biased toward basic and acidic residues. Over residues 27–52 (PGGGGGGGGGISPNGGAPLGGKGFSM) the composition is skewed to gly residues.

This is an uncharacterized protein from Dictyostelium discoideum (Social amoeba).